Consider the following 399-residue polypeptide: Mitochondrial glycine transporter (399 aa).

Solcar repeat units follow at residues 35 to 137, 164 to 251, and 266 to 374; these read IPPY…LRSV, LSTT…CKTN, and GNWM…GRSW. 6 consecutive transmembrane segments (helical) span residues 41–66, 112–138, 170–195, 226–249, 270–296, and 349–367; these read LAFG…TRLQ, GTAP…RSVA, LLTG…ARFE, GFTA…EACK, VVSA…KTRM, and GLGL…GWSI. The disordered stretch occupies residues 379–399; that stretch reads EASSSAQEAGTGTRLLDHKQV.

It belongs to the mitochondrial carrier (TC 2.A.29) family. SLC25A38 subfamily.

The protein localises to the mitochondrion inner membrane. The catalysed reaction is glycine(in) = glycine(out). Its function is as follows. Mitochondrial glycine transporter that imports glycine into the mitochondrial matrix. Plays an important role in providing glycine for the first enzymatic step in heme biosynthesis, the condensation of glycine with succinyl-CoA to produce 5-aminolevulinate (ALA) in the mitochondrial matrix. The sequence is that of Mitochondrial glycine transporter from Mycosarcoma maydis (Corn smut fungus).